A 479-amino-acid polypeptide reads, in one-letter code: UDP-glycosyltransferase 85A5 (479 aa).

UDP-alpha-D-glucose is bound by residues Ser301, 358-360 (CPQ), 375-383 (HSGWNSTLE), and 397-400 (FAEQ).

It belongs to the UDP-glycosyltransferase family. In terms of tissue distribution, expressed in roots, shoots and leaves.

This is UDP-glycosyltransferase 85A5 (UGT85A5) from Arabidopsis thaliana (Mouse-ear cress).